The primary structure comprises 311 residues: Pyrimidine-specific ribonucleoside hydrolase RihA (311 aa).

The active site involves His240.

The protein belongs to the IUNH family. RihA subfamily.

Functionally, hydrolyzes cytidine or uridine to ribose and cytosine or uracil, respectively. This is Pyrimidine-specific ribonucleoside hydrolase RihA from Shigella boydii serotype 4 (strain Sb227).